A 609-amino-acid chain; its full sequence is UvrABC system protein C (609 aa).

One can recognise a GIY-YIG domain in the interval 15 to 93 (SSAGVYRMYD…IKQYMPKYNV (79 aa)). Residues 202–237 (QQVVTNLVTKMEQAAEEFHYEQAAAYRDQITALRKV) form the UVR domain.

The protein belongs to the UvrC family. In terms of assembly, interacts with UvrB in an incision complex.

It localises to the cytoplasm. Its function is as follows. The UvrABC repair system catalyzes the recognition and processing of DNA lesions. UvrC both incises the 5' and 3' sides of the lesion. The N-terminal half is responsible for the 3' incision and the C-terminal half is responsible for the 5' incision. The sequence is that of UvrABC system protein C from Shewanella denitrificans (strain OS217 / ATCC BAA-1090 / DSM 15013).